A 111-amino-acid chain; its full sequence is uncharacterized protein (111 aa).

It belongs to the SUI1 family.

This is an uncharacterized protein from Synechocystis sp. (strain ATCC 27184 / PCC 6803 / Kazusa).